The chain runs to 222 residues: MINTQQLRQEQTEKAQQIILTDQFMAPTYIAGADVGFENSGAVTRAAIVVMHYPSFEIVEYQIARIATLLPYIPGLLSFRECPALLKAWQGIKQKPQLVFVDGQGIAHPRRLGVASHFGLLADIPTIGVAKSRLCGDDKKLDDDVGSTEKLMDKDEQLGWIYRSKKRCKPLYISPGYKVSMESALAWVKRCINGYRLPEPTRWADGIASNRRLFEQLNKNKL.

Positions 34 and 102 each coordinate Mg(2+).

The protein belongs to the endonuclease V family. Requires Mg(2+) as cofactor.

It localises to the cytoplasm. The catalysed reaction is Endonucleolytic cleavage at apurinic or apyrimidinic sites to products with a 5'-phosphate.. Its function is as follows. DNA repair enzyme involved in the repair of deaminated bases. Selectively cleaves double-stranded DNA at the second phosphodiester bond 3' to a deoxyinosine leaving behind the intact lesion on the nicked DNA. This chain is Endonuclease V, found in Proteus mirabilis (strain HI4320).